The chain runs to 89 residues: Cell division protein FtsL (89 aa).

The Cytoplasmic segment spans residues 1–6 (MAMNKL). A helical transmembrane segment spans residues 7–24 (NFLLLLAVCVSAFSVVMQ). Residues 25-89 (QNQYRLNFTA…GNTFMVEHQR (65 aa)) are Periplasmic-facing. The stretch at 33-73 (TALDKAKKQEIALEQDYAQMRLQQARLANHEAIRAAAEKQN) forms a coiled coil.

This sequence belongs to the FtsL family. Part of a complex composed of FtsB, FtsL and FtsQ.

The protein resides in the cell inner membrane. In terms of biological role, essential cell division protein. May link together the upstream cell division proteins, which are predominantly cytoplasmic, with the downstream cell division proteins, which are predominantly periplasmic. The polypeptide is Cell division protein FtsL (Neisseria meningitidis serogroup B (strain ATCC BAA-335 / MC58)).